Consider the following 64-residue polypeptide: Long neurotoxin MS2 (64 aa).

Disulfide bonds link C3–C24, C6–C11, C17–C41, C45–C57, and C58–C63.

This sequence belongs to the three-finger toxin family. Ancestral subfamily. In terms of tissue distribution, expressed by the venom gland.

The protein resides in the secreted. Functionally, produces peripheral paralysis by blocking neuromuscular transmission at the postsynaptic site. Very weak inhibitor of the endogenous nicotinic acetylcholine receptors (nAChR) in the human rhabdomyosarcoma TE 671 cell line. Not toxic to mice by intraperitoneal injection or to zebrafish by injection at the back of the dorsolateral region. This is Long neurotoxin MS2 from Micrurus surinamensis (Surinam coral snake).